We begin with the raw amino-acid sequence, 1363 residues long: DNA-directed RNA polymerase subunit beta (1363 aa).

The protein belongs to the RNA polymerase beta chain family. The RNAP catalytic core consists of 2 alpha, 1 beta, 1 beta' and 1 omega subunit. When a sigma factor is associated with the core the holoenzyme is formed, which can initiate transcription.

The catalysed reaction is RNA(n) + a ribonucleoside 5'-triphosphate = RNA(n+1) + diphosphate. Its function is as follows. DNA-dependent RNA polymerase catalyzes the transcription of DNA into RNA using the four ribonucleoside triphosphates as substrates. The sequence is that of DNA-directed RNA polymerase subunit beta from Neorickettsia risticii (Ehrlichia risticii).